The primary structure comprises 355 residues: MKIAVLLSGGVDSSVALYRIINKGYSNIKCYYLKIWVEDELSYIGNCPWQEDLNYVEAICNKFNVPYEIINFQKEYYNKVVSYTIEELKNGNTPSPDIFCNQRIKFGAFFEKINSQYDLVVTGHYAKIQIKESKFLLKQAKDKIKDQSYFLSHLSQKQMSKLYFPLGTLLKSEVRQIAKNINLPNKDRKDSQGICFLGKIKYNEFIKYHLGEKKGNIIEKETGKIIGIHNGYWFFTVGQRRGIKLSNGPWFVIEKDLEKNIIYISHNENYLKQAKRKFLVHEIHWINDTPTNFENFKIKIRHGEKKYSCKLKLITNNLMEISLNKKDQGISPGQFAIFYKNTECLGGAKIFKIIE.

Residues 6–13 (LLSGGVDS) and Leu-33 each bind ATP. Cys-100 serves as the catalytic Nucleophile. Cysteines 100 and 195 form a disulfide. ATP is bound at residue Gly-123. Residues 145-147 (KDQ) are interaction with tRNA. The active-site Cysteine persulfide intermediate is the Cys-195.

This sequence belongs to the MnmA/TRMU family.

It is found in the cytoplasm. The catalysed reaction is S-sulfanyl-L-cysteinyl-[protein] + uridine(34) in tRNA + AH2 + ATP = 2-thiouridine(34) in tRNA + L-cysteinyl-[protein] + A + AMP + diphosphate + H(+). Catalyzes the 2-thiolation of uridine at the wobble position (U34) of tRNA, leading to the formation of s(2)U34. The sequence is that of tRNA-specific 2-thiouridylase MnmA from Borreliella burgdorferi (strain ATCC 35210 / DSM 4680 / CIP 102532 / B31) (Borrelia burgdorferi).